Here is a 204-residue protein sequence, read N- to C-terminus: Altered inheritance of mitochondria protein 20 (204 aa).

The helical transmembrane segment at 6–26 (VAVGTAVGIPIAVGVIIALIF) threads the bilayer.

Belongs to the SKG1 family.

The protein localises to the vacuole membrane. Its function is as follows. Involved in cell cycle progression and surviving DNA damage. This is Altered inheritance of mitochondria protein 20 (AIM20) from Saccharomyces cerevisiae (strain JAY291) (Baker's yeast).